The following is a 621-amino-acid chain: MAU2 chromatid cohesion factor homolog (621 aa).

3 TPR repeats span residues 96–129 (FDTA…SQNN), 451–484 (GGFY…ANAE), and 491–524 (SCSL…ASKI).

Belongs to the SCC4/mau-2 family. Interacts with Nipped-B to form the cohesin loading complex.

It localises to the nucleus. Its subcellular location is the nucleoplasm. Functionally, required for association of the cohesin complex with chromatin during interphase. Plays a role in sister chromatid cohesion and normal progression through prometaphase. This is MAU2 chromatid cohesion factor homolog from Drosophila virilis (Fruit fly).